The sequence spans 431 residues: Enolase (431 aa).

Residue Q166 coordinates (2R)-2-phosphoglycerate. The active-site Proton donor is E208. D245, E288, and D315 together coordinate Mg(2+). Residues K340, R369, S370, and K391 each coordinate (2R)-2-phosphoglycerate. The Proton acceptor role is filled by K340.

It belongs to the enolase family. The cofactor is Mg(2+).

It is found in the cytoplasm. It localises to the secreted. The protein localises to the cell surface. It carries out the reaction (2R)-2-phosphoglycerate = phosphoenolpyruvate + H2O. Its pathway is carbohydrate degradation; glycolysis; pyruvate from D-glyceraldehyde 3-phosphate: step 4/5. Functionally, catalyzes the reversible conversion of 2-phosphoglycerate (2-PG) into phosphoenolpyruvate (PEP). It is essential for the degradation of carbohydrates via glycolysis. In Clostridium tetani (strain Massachusetts / E88), this protein is Enolase.